The chain runs to 459 residues: Pentatricopeptide repeat-containing protein At5g18390, mitochondrial (459 aa).

A mitochondrion-targeting transit peptide spans M1–Y7. 9 PPR repeats span residues T110–I144, S145–T175, T181–P215, D216–P250, P251–P285, D286–V320, D321–P355, F356–P390, and N391–P425.

This sequence belongs to the PPR family. P subfamily.

It is found in the mitochondrion. This is Pentatricopeptide repeat-containing protein At5g18390, mitochondrial from Arabidopsis thaliana (Mouse-ear cress).